Here is a 171-residue protein sequence, read N- to C-terminus: Large ribosomal subunit protein bL9 (171 aa).

It belongs to the bacterial ribosomal protein bL9 family.

In terms of biological role, binds to the 23S rRNA. In Rickettsia akari (strain Hartford), this protein is Large ribosomal subunit protein bL9.